The sequence spans 74 residues: Control protein C.MunI (74 aa).

Residues 12 to 67 (LKKLRKEKTDLSQESFAAQIDLDRTYYSSIENGKRNVSLVNLEKISAGLGITLSEL) enclose the HTH cro/C1-type domain. The segment at residues 23–42 (SQESFAAQIDLDRTYYSSIE) is a DNA-binding region (H-T-H motif).

In terms of biological role, probably controls expression of its associated restriction-modification system MunI. The polypeptide is Control protein C.MunI (Mycoplasma sp).